The primary structure comprises 609 residues: Mitochondrial nucleoid-associated protein 1 (609 aa).

The Mitochondrial matrix segment spans residues 1 to 552; that stretch reads MSDNPPRMEV…IRCNTTIRKS (552 aa). Disordered stretches follow at residues 142–168, 183–202, and 410–441; these read ASEKTSPKRELAKDLPKSGESRCNPSE, SNQDRKYSSTLPNDVQTTSG, and QLSLEPKSDSQFQASHTGCQSPLCSAQRHTPQ. A compositionally biased stretch (basic and acidic residues) spans 146–161; sequence TSPKRELAKDLPKSGE. The span at 418–441 shows a compositional bias: polar residues; that stretch reads DSQFQASHTGCQSPLCSAQRHTPQ. Residues 553–573 form a helical membrane-spanning segment; sequence GFGGITMLFTGYFVLCCSWSF. The Mitochondrial intermembrane segment spans residues 574 to 609; sequence RRLKKLCRPLPWKSTVPPCIGVAKTTGDCRSKTCLD.

It localises to the mitochondrion inner membrane. The protein localises to the mitochondrion matrix. It is found in the mitochondrion nucleoid. Critical regulator of mitochondrial DNA (mtDNA) abundance. Binds dsDNA throughout the mitochondrial genome without sequence specificity and controls mtDNA copy number by promoting its replication. Also plays important roles in mitochondrial metabolism and cell proliferation. In Homo sapiens (Human), this protein is Mitochondrial nucleoid-associated protein 1.